Reading from the N-terminus, the 372-residue chain is Mannan endo-1,4-beta-mannosidase 8 (372 aa).

Positions 57 and 172 each coordinate substrate. Glutamate 173 (proton donor) is an active-site residue. Position 253 (tyrosine 253) interacts with substrate. Catalysis depends on glutamate 293, which acts as the Nucleophile. Tryptophan 335 contacts substrate.

Belongs to the glycosyl hydrolase 5 (cellulase A) family. As to expression, expressed in stems and leaves and seeds.

It catalyses the reaction Random hydrolysis of (1-&gt;4)-beta-D-mannosidic linkages in mannans, galactomannans and glucomannans.. The protein is Mannan endo-1,4-beta-mannosidase 8 (MAN8) of Oryza sativa subsp. japonica (Rice).